Reading from the N-terminus, the 174-residue chain is Peptide methionine sulfoxide reductase MsrA (174 aa).

C10 is a catalytic residue.

Belongs to the MsrA Met sulfoxide reductase family.

It catalyses the reaction L-methionyl-[protein] + [thioredoxin]-disulfide + H2O = L-methionyl-(S)-S-oxide-[protein] + [thioredoxin]-dithiol. It carries out the reaction [thioredoxin]-disulfide + L-methionine + H2O = L-methionine (S)-S-oxide + [thioredoxin]-dithiol. Has an important function as a repair enzyme for proteins that have been inactivated by oxidation. Catalyzes the reversible oxidation-reduction of methionine sulfoxide in proteins to methionine. The protein is Peptide methionine sulfoxide reductase MsrA of Arthrobacter sp. (strain FB24).